The primary structure comprises 141 residues: Hemoglobin subunit alpha (141 aa).

One can recognise a Globin domain in the interval 1-141 (VLSPADKTNV…VSTVLTSKYR (141 aa)). Ser-3 is subject to Phosphoserine. Lys-7 carries the post-translational modification N6-succinyllysine. Position 8 is a phosphothreonine (Thr-8). Lys-11 bears the N6-succinyllysine mark. At Lys-16 the chain carries N6-acetyllysine; alternate. Position 16 is an N6-succinyllysine; alternate (Lys-16). Phosphotyrosine is present on Tyr-24. A Phosphoserine modification is found at Ser-35. N6-succinyllysine is present on Lys-40. The residue at position 49 (Ser-49) is a Phosphoserine. His-58 is a binding site for O2. His-87 is a binding site for heme b. Ser-102 bears the Phosphoserine mark. The residue at position 108 (Thr-108) is a Phosphothreonine. Phosphoserine is present on residues Ser-124 and Ser-131. Thr-134 and Thr-137 each carry phosphothreonine. Position 138 is a phosphoserine (Ser-138).

This sequence belongs to the globin family. In terms of assembly, heterotetramer of two alpha chains and two beta chains. As to expression, red blood cells.

In terms of biological role, involved in oxygen transport from the lung to the various peripheral tissues. The sequence is that of Hemoglobin subunit alpha from Otospermophilus beecheyi (California ground squirrel).